Here is a 320-residue protein sequence, read N- to C-terminus: Uridine phosphorylase 2 (320 aa).

Phosphate is bound by residues Gly66, Arg100, and 144-147 (RIGT). Cys95 and Cys102 form a disulfide bridge. Residues 148–149 (SG) and 223–225 (QGR) each bind uridine.

Belongs to the PNP/UDP phosphorylase family. As to quaternary structure, homodimer. In terms of tissue distribution, liver specific.

It carries out the reaction uridine + phosphate = alpha-D-ribose 1-phosphate + uracil. The catalysed reaction is 2'-deoxyuridine + phosphate = 2-deoxy-alpha-D-ribose 1-phosphate + uracil. It participates in pyrimidine metabolism; UMP biosynthesis via salvage pathway; uracil from uridine (phosphorylase route): step 1/1. Its activity is regulated as follows. A conditional disulfide bridge can form within the protein that dislocates a critical phosphate-coordinating arginine Arg-100 away from the active site, disabling the enzyme. Its function is as follows. Catalyzes the reversible phosphorylytic cleavage of uridine to uracil and ribose-1-phosphate which can then be utilized as carbon and energy sources or in the rescue of pyrimidine bases for nucleotide synthesis. Shows broad substrate specificity and can also accept deoxyuridine and other analogous compounds. The sequence is that of Uridine phosphorylase 2 from Mus musculus (Mouse).